The chain runs to 686 residues: Protein arginine N-methyltransferase 7 (686 aa).

SAM-dependent MTase PRMT-type domains are found at residues 5 to 352 (SDDY…FSWW) and 357 to 686 (DLSL…FKFD).

The protein belongs to the class I-like SAM-binding methyltransferase superfamily. Protein arginine N-methyltransferase family. PRMT7 subfamily.

Essential arginine methyltransferase that can both catalyze the formation of omega-N monomethylarginine (MMA) and symmetrical dimethylarginine (sDMA). Specifically mediates the symmetrical dimethylation of arginine residues in the small nuclear ribonucleoproteins SmD1 and SmD3. In Aedes aegypti (Yellowfever mosquito), this protein is Protein arginine N-methyltransferase 7 (Art7).